The following is a 244-amino-acid chain: Thiol S-methyltransferase TMT1A (244 aa).

The interval 1–28 is targeting to lipid droplets; sequence MELTIFILRLAIYILTFPLYLLNFLGLW. The N-terminal stretch at 1-29 is a signal peptide; sequence MELTIFILRLAIYILTFPLYLLNFLGLWS.

Belongs to the methyltransferase superfamily. As to quaternary structure, (Microbial infection) Interacts with HCV non-structural protein 4B/NS4B (via C-terminal region); this interaction may promote the recruitment of NS4B in the proximity of lipid droplet. In terms of assembly, self-associates. Interacts with SNRNP200; this interaction may promote the odontogenic differentiation. Methylated at lysine residues most likely by EZH2. Expressed in the liver.

It localises to the lipid droplet. The protein localises to the endoplasmic reticulum. The protein resides in the membrane. It is found in the microsome. Its subcellular location is the cytoplasm. It localises to the cytosol. The enzyme catalyses a thiol + S-adenosyl-L-methionine = a methyl thioether + S-adenosyl-L-homocysteine + H(+). It catalyses the reaction an adenosine in mRNA + S-adenosyl-L-methionine = an N(6)-methyladenosine in mRNA + S-adenosyl-L-homocysteine + H(+). With respect to regulation, inhibited by 2,3-dichloro-alpha-methylbenzylamine (DCMB). Its function is as follows. Thiol S-methyltransferase that catalyzes the transfer of a methyl group from S-adenosyl-L-methionine to alkyl and phenolic thiol-containing acceptor substrates. Together with TMT1B accounts for most of S-thiol methylation activity in the endoplasmic reticulum of hepatocytes. Able to methylate the N6 position of adenosine residues in long non-coding RNAs (lncRNAs). May facilitate lncRNAs transfer into exosomes at the tumor-stroma interface. Promotes osteogenic and odontogenic differentiation by regulating the expression of genes involved in stem cell differentiation and survival. Targeted from the endoplasmic reticulum to lipid droplets, where it recruits cellular proteins to form functional organelles. Functionally, (Microbial infection) May be involved in the assembly and release stages of hepatitis C virus (HCV) life cycle and thus play a crucial role in HCV propagation. This chain is Thiol S-methyltransferase TMT1A, found in Homo sapiens (Human).